The chain runs to 118 residues: Ferredoxin-thioredoxin reductase, catalytic chain (118 aa).

A [4Fe-4S] cluster-binding site is contributed by Cys-57. The active-site Nucleophile is Cys-59. A disulfide bond links Cys-59 and Cys-89. Residues Cys-76, Cys-78, and Cys-87 each coordinate [4Fe-4S] cluster.

This sequence belongs to the ferredoxin thioredoxin reductase beta subunit family. As to quaternary structure, heterodimer of subunit A (variable subunit) and subunit B (catalytic subunit). Heterodimeric FTR forms a complex with ferredoxin and thioredoxin. The cofactor is [4Fe-4S] cluster.

Its subcellular location is the plastid. It is found in the chloroplast. The catalysed reaction is [thioredoxin]-disulfide + 2 reduced [2Fe-2S]-[ferredoxin] + 2 H(+) = [thioredoxin]-dithiol + 2 oxidized [2Fe-2S]-[ferredoxin]. Catalytic subunit of the ferredoxin-thioredoxin reductase (FTR), which catalyzes the two-electron reduction of thioredoxins by the electrons provided by reduced ferredoxin. This is Ferredoxin-thioredoxin reductase, catalytic chain (ftrB) from Porphyra purpurea (Red seaweed).